The sequence spans 336 residues: 25S rRNA (uridine(2634)-N(3))-methyltransferase (336 aa).

The interval 286-307 (PGYHHRRTNSEQDTTKPAKERD) is disordered. Over residues 293–307 (TNSEQDTTKPAKERD) the composition is skewed to basic and acidic residues.

The protein belongs to the class I-like SAM-binding methyltransferase superfamily. BMT5 family.

The protein resides in the nucleus. It is found in the nucleolus. It catalyses the reaction uridine(2634) in 25S rRNA + S-adenosyl-L-methionine = N(3)-methyluridine(2634) in 25S rRNA + S-adenosyl-L-homocysteine + H(+). In terms of biological role, S-adenosyl-L-methionine-dependent methyltransferase that specifically methylates the N(3) position of uridine 2634 (m3U2634) in 25S rRNA. This chain is 25S rRNA (uridine(2634)-N(3))-methyltransferase (BMT5), found in Saccharomyces cerevisiae (strain ATCC 204508 / S288c) (Baker's yeast).